A 156-amino-acid chain; its full sequence is Oxidized purine nucleoside triphosphate hydrolase (156 aa).

In terms of domain architecture, Nudix hydrolase spans 3–132 (TSRLYTLVLV…WFPLLLQKKK (130 aa)). Thr-8 contacts 2-oxo-dATP. Residues Thr-8, Lys-23, Asn-33, 35 to 38 (FGGK), and Glu-52 contribute to the 8-oxo-dGTP site. 2-oxo-dATP is bound by residues Asn-33 and 35–38 (FGGK). Mg(2+) is bound by residues Gly-36, Glu-52, Glu-55, Glu-56, and Glu-100. The short motif at 37–58 (GKVQEGETIEDGAKRELLEESG) is the Nudix box element. Residues Glu-56, Glu-100, and 117 to 120 (WPDD) contribute to the 8-oxo-dGTP site. A 2-oxo-dATP-binding site is contributed by 117-120 (WPDD).

It belongs to the Nudix hydrolase family. As to quaternary structure, monomer. It depends on Mg(2+) as a cofactor. In terms of tissue distribution, high expression levels detected in thymus, liver, spleen, kidney, testis and large intestine, with lower levels detected in brain, heart, lung and stomach (at protein level). Expressed in kidney, liver and small intestine.

It is found in the cytoplasm. The protein localises to the nucleus. The protein resides in the nucleus membrane. It localises to the cytoplasmic vesicle. Its subcellular location is the secretory vesicle. It is found in the acrosome. The enzyme catalyses 2-oxo-dATP + H2O = 2-oxo-dAMP + diphosphate + H(+). It carries out the reaction 2-oxo-ATP + H2O = 2-oxo-AMP + diphosphate + H(+). It catalyses the reaction 8-oxo-dGTP + H2O = 8-oxo-dGMP + diphosphate + H(+). The catalysed reaction is 8-oxo-dATP + H2O = 8-oxo-dAMP + diphosphate + H(+). The enzyme catalyses O(6)-methyl-dGTP + H2O = O(6)-methyl-dGMP + diphosphate + H(+). It carries out the reaction N(6)-methyl-dATP + H2O = N(6)-methyl-dAMP + diphosphate + H(+). It catalyses the reaction N(6)-methyl-ATP + H2O = N(6)-methyl-AMP + diphosphate + H(+). Its function is as follows. Oxidized purine nucleoside triphosphate hydrolase which is a prominent sanitizer of the oxidized nucleotide pool. Catalyzes the hydrolysis of 2-oxo-dATP (2-hydroxy-dATP) into 2-oxo-dAMP. Also has a significant hydrolase activity toward 2-oxo-ATP, 8-oxo-dGTP and 8-oxo-dATP. Through the hydrolysis of oxidized purine nucleoside triphosphates, prevents their incorporation into DNA and the subsequent transversions A:T to C:G and G:C to T:A. Also catalyzes the hydrolysis of methylated purine nucleoside triphosphate preventing their integration into DNA. Through this antimutagenic activity protects cells from oxidative stress. This chain is Oxidized purine nucleoside triphosphate hydrolase (Nudt1), found in Mus musculus (Mouse).